Reading from the N-terminus, the 556-residue chain is Arginine--tRNA ligase (556 aa).

Residues 117–127 carry the 'HIGH' region motif; that stretch reads PNVAKQMHVGH.

The protein belongs to the class-I aminoacyl-tRNA synthetase family. Monomer.

It localises to the cytoplasm. The catalysed reaction is tRNA(Arg) + L-arginine + ATP = L-arginyl-tRNA(Arg) + AMP + diphosphate. In Cutibacterium acnes (strain DSM 16379 / KPA171202) (Propionibacterium acnes), this protein is Arginine--tRNA ligase.